Consider the following 229-residue polypeptide: Putative ankyrin repeat protein L148 (229 aa).

ANK repeat units lie at residues 70-95, 96-126, 127-156, and 157-186; these read ILDY…PDNY, IGTE…DLRI, NNDY…NCQA, and YNNA…SVAA.

The protein is Putative ankyrin repeat protein L148 of Acanthamoeba polyphaga (Amoeba).